The sequence spans 188 residues: MDMGSKEALMESPPDYSAAPRGRFGIPCCPVHLKRLLIVVVVVVLVVVVIVGALLMGLHMSQKHTEMVLEMSIGAPEVQQRLALSEWAGTTATFPIGSTGIVTCDYQRLLIAYKPAPGTCCYLMKMAPDSIPSLEALARKFQANPAEPPTQRGQDKGPAAGPASSGGELAFLGAAVSTLCGEVPLIYI.

The propeptide occupies 1–23 (MDMGSKEALMESPPDYSAAPRGR). S-palmitoyl cysteine attachment occurs at residues Cys28 and Cys29. Residues 59–188 (HMSQKHTEMV…LCGEVPLIYI (130 aa)) constitute a propeptide that is removed on maturation. The BRICHOS domain occupies 94-188 (FPIGSTGIVT…LCGEVPLIYI (95 aa)). The cysteines at positions 121 and 180 are disulfide-linked. The tract at residues 144-164 (NPAEPPTQRGQDKGPAAGPAS) is disordered.

The protein resides in the secreted. Its subcellular location is the extracellular space. It localises to the surface film. Pulmonary surfactant associated proteins promote alveolar stability by lowering the surface tension at the air-liquid interface in the peripheral air spaces. The protein is Surfactant protein C (SFTPC) of Oryctolagus cuniculus (Rabbit).